The sequence spans 1516 residues: Myosin-14 (1516 aa).

Residues 7–56 form the Myosin N-terminal SH3-like domain; that stretch reads NVGSCVWVEDPEVAWIDGEVIEVKGSDIKVKCTSGKTVAIKVSSAYPKDV. The Myosin motor domain maps to 61-738; sequence SGVDDMTRLA…QMADLDARRN (678 aa). ATP is bound by residues 155–162 and 208–216; these read GESGAGKT and NNNSSRFGK. Actin-binding regions lie at residues 494–528, 530–553, 588–612, and 612–634; these read LIEKKAGGIISLLNEACMFPRATHETFAEKMYQTF, DHKHFSKPKLSRTDFTICHYAGDV, FPLLAEDANKKSKFSSISSRFKQQL, and LVTLLETLSTTEPHYIRCVKPNN. 6 consecutive IQ domains span residues 741 to 770, 764 to 793, 789 to 818, 812 to 841, 837 to 866, and 860 to 889; these read LGRAASRIQRKFRSYLSRKTFLMLRKVATN, LRKVATNMQAVCRGQLSRLIFEGLRRDAAV, RDAAVLEIQRDIRMHLARKSYKELYFAAVS, LYFAAVSIQLGIRGMASRGRLRFQRQDKAA, QDKAAIMIQSHCRKFLAQLHYQRLKKAAIT, and LKKAAITTQSAWRARLARKELRKLKMAAKE. The stretch at 890-1056 forms a coiled coil; the sequence is TGVLEAAKSK…ENKILRQKSL (167 aa). The tract at residues 1061–1085 is disordered; sequence GHLPPTPVKGSQNGHFSSKESPFNG. The span at 1069-1084 shows a compositional bias: polar residues; that stretch reads KGSQNGHFSSKESPFN. The Dilute domain maps to 1158-1463; the sequence is DRLVQMIGSA…IANMRVLMTE (306 aa).

It belongs to the TRAFAC class myosin-kinesin ATPase superfamily. Myosin family. Plant myosin class XI subfamily. In terms of assembly, homodimer.

Its function is as follows. Myosin heavy chain that is required for the cell cycle-regulated transport of various organelles and proteins for their segregation. Functions by binding with its tail domain to receptor proteins on organelles and exerting force with its N-terminal motor domain against actin filaments, thereby transporting its cargo along polarized actin cables. The polypeptide is Myosin-14 (XI-H) (Arabidopsis thaliana (Mouse-ear cress)).